Here is a 383-residue protein sequence, read N- to C-terminus: NAD(P) transhydrogenase subunit alpha part 1 (383 aa).

Residues 131–134 (QNMD), V181, 201–203 (DVR), and G231 contribute to the NAD(+) site.

This sequence belongs to the AlaDH/PNT family. Heterotrimer of two alpha chains and a beta (PntB) chain; in Rickettsia, the alpha chain is made of two subunits (PntAA and PntAB) and forms a dimer.

It catalyses the reaction NAD(+) + NADPH + H(+)(in) = NADH + NADP(+) + H(+)(out). In terms of biological role, the transhydrogenation between NADH and NADP is coupled to respiration and ATP hydrolysis and functions as a proton pump across the membrane. In Rickettsia prowazekii (strain Madrid E), this protein is NAD(P) transhydrogenase subunit alpha part 1 (pntAA).